Consider the following 138-residue polypeptide: Large ribosomal subunit protein uL16 (138 aa).

A compositionally biased stretch (basic residues) spans 1–19 (MLIPKRVKYRRQHRPHRSG). Residues 1–24 (MLIPKRVKYRRQHRPHRSGVSKGG) are disordered.

This sequence belongs to the universal ribosomal protein uL16 family. Part of the 50S ribosomal subunit.

Binds 23S rRNA and is also seen to make contacts with the A and possibly P site tRNAs. This chain is Large ribosomal subunit protein uL16, found in Corynebacterium jeikeium (strain K411).